The sequence spans 92 residues: UPF0335 protein BMEI0289 (92 aa).

This sequence belongs to the UPF0335 family.

In Brucella melitensis biotype 1 (strain ATCC 23456 / CCUG 17765 / NCTC 10094 / 16M), this protein is UPF0335 protein BMEI0289.